The chain runs to 506 residues: NAD(P)H-quinone oxidoreductase subunit 2 (506 aa).

Transmembrane regions (helical) follow at residues 14 to 34 (AIIPEAFILLGIVGTLLVDLA), 42 to 62 (WAPVICYISLGSSLISLALQW), 79 to 99 (LAIAFRSIIALSTLISLLISW), 108 to 128 (PIGEFAAIVLSATLGAMLLCG), 132 to 152 (LVSVFISLETLSVASYCLSGY), 167 to 187 (LLVGSAAAAVYLYGSSFLYGL), 206 to 226 (FITSLSLVFVLSTVAFKIAAV), 240 to 260 (PTPVVAFLSVGSKTAGFAFAI), 276 to 296 (LLFTILAILSMALGNIVALAQ), 302 to 322 (MLAYSSIGQAGFVMIGIVSGT), 330 to 350 (VLYLAAYLFMNLGAFSCVILF), 374 to 394 (LGLSLCLLSLGGLPPMLGFFG), 409 to 429 (LLVVVGLITSVISIYYYISVI), and 462 to 482 (IALYTCIAVTALGGILSNPLF).

Belongs to the complex I subunit 2 family. As to quaternary structure, NDH-1 can be composed of about 15 different subunits; different subcomplexes with different compositions have been identified which probably have different functions.

Its subcellular location is the cellular thylakoid membrane. It catalyses the reaction a plastoquinone + NADH + (n+1) H(+)(in) = a plastoquinol + NAD(+) + n H(+)(out). It carries out the reaction a plastoquinone + NADPH + (n+1) H(+)(in) = a plastoquinol + NADP(+) + n H(+)(out). Functionally, NDH-1 shuttles electrons from an unknown electron donor, via FMN and iron-sulfur (Fe-S) centers, to quinones in the respiratory and/or the photosynthetic chain. The immediate electron acceptor for the enzyme in this species is believed to be plastoquinone. Couples the redox reaction to proton translocation, and thus conserves the redox energy in a proton gradient. Cyanobacterial NDH-1 also plays a role in inorganic carbon-concentration. The chain is NAD(P)H-quinone oxidoreductase subunit 2 from Prochlorococcus marinus subsp. pastoris (strain CCMP1986 / NIES-2087 / MED4).